The sequence spans 140 residues: L-fucose mutarotase (140 aa).

Catalysis depends on H22, which acts as the Proton donor. Residues D30, R107, and 129 to 131 contribute to the substrate site; that span reads YGN.

Belongs to the RbsD / FucU family. FucU mutarotase subfamily. Homodecamer.

It is found in the cytoplasm. It catalyses the reaction alpha-L-fucose = beta-L-fucose. Its pathway is carbohydrate metabolism; L-fucose metabolism. Functionally, involved in the anomeric conversion of L-fucose. In Klebsiella pneumoniae (strain 342), this protein is L-fucose mutarotase.